Here is a 20-residue protein sequence, read N- to C-terminus: Protein PR-L6 (20 aa).

The protein belongs to the BetVI family.

This Lupinus luteus (European yellow lupine) protein is Protein PR-L6.